The chain runs to 369 residues: H-2 class I histocompatibility antigen, K-B alpha chain (369 aa).

Positions 1–21 (MVPCTLLLLLAAALAPTQTRA) are cleaved as a signal peptide. The alpha-1 stretch occupies residues 22–111 (GPHSLRYFVT…LLGYYNQSKG (90 aa)). Residues 22–305 (GPHSLRYFVT…EPPPSTVSNM (284 aa)) lie on the Extracellular side of the membrane. N-linked (GlcNAc...) asparagine glycosylation occurs at N107. An alpha-2 region spans residues 112–203 (GSHTIQVISG…KNGNATLLRT (92 aa)). A disulfide bond links C122 and C185. N197 is a glycosylation site (N-linked (GlcNAc...) asparagine). Positions 204-295 (DSPKAHVTHH…GLPEPLTLRW (92 aa)) are alpha-3. In terms of domain architecture, Ig-like C1-type spans 206 to 294 (PKAHVTHHSR…QGLPEPLTLR (89 aa)). An intrachain disulfide couples C224 to C280. Residues 296–305 (EPPPSTVSNM) are connecting peptide. A helical membrane pass occupies residues 306-328 (ATVAVLVVLGAAIVTGAVVAFVM). The Cytoplasmic portion of the chain corresponds to 329-369 (KMRRRNTGGKGGDYALAPGSQTSDLSLPDCKVMVHDPHSLA). A phosphoserine mark is found at S351 and S354.

The protein belongs to the MHC class I family. As to quaternary structure, heterodimer of an alpha chain and a beta chain (beta-2-microglobulin).

Its subcellular location is the membrane. Functionally, involved in the presentation of foreign antigens to the immune system. The sequence is that of H-2 class I histocompatibility antigen, K-B alpha chain (H2-K1) from Mus musculus (Mouse).